The chain runs to 152 residues: AIG2-like protein D (152 aa).

Substrate is bound at residue 13 to 18 (YGSLMA). The Proton acceptor role is filled by glutamate 81.

This sequence belongs to the gamma-glutamylcyclotransferase family. Expressed mainly in leaves.

Functionally, putative gamma-glutamylcyclotransferase. The protein is AIG2-like protein D of Arabidopsis thaliana (Mouse-ear cress).